Consider the following 1203-residue polypeptide: DNA-directed RNA polymerase subunit beta' (1203 aa).

4 residues coordinate Zn(2+): C60, C62, C75, and C78. Mg(2+)-binding residues include D449, D451, and D453. Zn(2+) is bound by residues C818, C892, C899, and C902.

Belongs to the RNA polymerase beta' chain family. As to quaternary structure, the RNAP catalytic core consists of 2 alpha, 1 beta, 1 beta' and 1 omega subunit. When a sigma factor is associated with the core the holoenzyme is formed, which can initiate transcription. Requires Mg(2+) as cofactor. It depends on Zn(2+) as a cofactor.

The enzyme catalyses RNA(n) + a ribonucleoside 5'-triphosphate = RNA(n+1) + diphosphate. Its function is as follows. DNA-dependent RNA polymerase catalyzes the transcription of DNA into RNA using the four ribonucleoside triphosphates as substrates. This chain is DNA-directed RNA polymerase subunit beta', found in Bacillus thuringiensis (strain Al Hakam).